A 242-amino-acid chain; its full sequence is Phosphoribosylaminoimidazole-succinocarboxamide synthase (242 aa).

The protein belongs to the SAICAR synthetase family.

It catalyses the reaction 5-amino-1-(5-phospho-D-ribosyl)imidazole-4-carboxylate + L-aspartate + ATP = (2S)-2-[5-amino-1-(5-phospho-beta-D-ribosyl)imidazole-4-carboxamido]succinate + ADP + phosphate + 2 H(+). Its pathway is purine metabolism; IMP biosynthesis via de novo pathway; 5-amino-1-(5-phospho-D-ribosyl)imidazole-4-carboxamide from 5-amino-1-(5-phospho-D-ribosyl)imidazole-4-carboxylate: step 1/2. The sequence is that of Phosphoribosylaminoimidazole-succinocarboxamide synthase from Pediococcus pentosaceus (strain ATCC 25745 / CCUG 21536 / LMG 10740 / 183-1w).